Reading from the N-terminus, the 253-residue chain is 3-deoxy-manno-octulosonate cytidylyltransferase (253 aa).

This sequence belongs to the KdsB family.

It localises to the cytoplasm. The enzyme catalyses 3-deoxy-alpha-D-manno-oct-2-ulosonate + CTP = CMP-3-deoxy-beta-D-manno-octulosonate + diphosphate. The protein operates within nucleotide-sugar biosynthesis; CMP-3-deoxy-D-manno-octulosonate biosynthesis; CMP-3-deoxy-D-manno-octulosonate from 3-deoxy-D-manno-octulosonate and CTP: step 1/1. It functions in the pathway bacterial outer membrane biogenesis; lipopolysaccharide biosynthesis. Functionally, activates KDO (a required 8-carbon sugar) for incorporation into bacterial lipopolysaccharide in Gram-negative bacteria. This Neisseria meningitidis serogroup C / serotype 2a (strain ATCC 700532 / DSM 15464 / FAM18) protein is 3-deoxy-manno-octulosonate cytidylyltransferase.